Here is a 476-residue protein sequence, read N- to C-terminus: Aspartyl/glutamyl-tRNA(Asn/Gln) amidotransferase subunit B (476 aa).

This sequence belongs to the GatB/GatE family. GatB subfamily. In terms of assembly, heterotrimer of A, B and C subunits.

The enzyme catalyses L-glutamyl-tRNA(Gln) + L-glutamine + ATP + H2O = L-glutaminyl-tRNA(Gln) + L-glutamate + ADP + phosphate + H(+). The catalysed reaction is L-aspartyl-tRNA(Asn) + L-glutamine + ATP + H2O = L-asparaginyl-tRNA(Asn) + L-glutamate + ADP + phosphate + 2 H(+). Its function is as follows. Allows the formation of correctly charged Asn-tRNA(Asn) or Gln-tRNA(Gln) through the transamidation of misacylated Asp-tRNA(Asn) or Glu-tRNA(Gln) in organisms which lack either or both of asparaginyl-tRNA or glutaminyl-tRNA synthetases. The reaction takes place in the presence of glutamine and ATP through an activated phospho-Asp-tRNA(Asn) or phospho-Glu-tRNA(Gln). The protein is Aspartyl/glutamyl-tRNA(Asn/Gln) amidotransferase subunit B of Neisseria meningitidis serogroup A / serotype 4A (strain DSM 15465 / Z2491).